Consider the following 306-residue polypeptide: Probable zinc metalloprotease VDBG_06923 (306 aa).

The first 28 residues, 1 to 28 (MNYEAEQPGANDDASGVAVALELARVLA), serve as a signal peptide directing secretion. The Zn(2+) site is built by Asp-12 and Glu-45. N-linked (GlcNAc...) asparagine glycosylation is present at Asn-60. Asp-72 contributes to the Zn(2+) binding site. A Fibronectin type-III domain is found at 218–306 (APAKVNNVRV…KSPVTIPFPT (89 aa)). Residues Asn-228, Asn-234, and Asn-244 are each glycosylated (N-linked (GlcNAc...) asparagine).

It belongs to the peptidase M28 family. M28B subfamily. Requires Zn(2+) as cofactor.

It localises to the secreted. In Verticillium alfalfae (strain VaMs.102 / ATCC MYA-4576 / FGSC 10136) (Verticillium wilt of alfalfa), this protein is Probable zinc metalloprotease VDBG_06923.